A 304-amino-acid polypeptide reads, in one-letter code: Aspartate carbamoyltransferase catalytic subunit (304 aa).

Residues Arg53 and Thr54 each coordinate carbamoyl phosphate. Residue Lys82 coordinates L-aspartate. 3 residues coordinate carbamoyl phosphate: Arg103, His131, and Gln134. L-aspartate-binding residues include Arg163 and Arg224. 2 residues coordinate carbamoyl phosphate: Leu263 and Pro264.

It belongs to the aspartate/ornithine carbamoyltransferase superfamily. ATCase family. In terms of assembly, heterooligomer of catalytic and regulatory chains.

The enzyme catalyses carbamoyl phosphate + L-aspartate = N-carbamoyl-L-aspartate + phosphate + H(+). It functions in the pathway pyrimidine metabolism; UMP biosynthesis via de novo pathway; (S)-dihydroorotate from bicarbonate: step 2/3. Its function is as follows. Catalyzes the condensation of carbamoyl phosphate and aspartate to form carbamoyl aspartate and inorganic phosphate, the committed step in the de novo pyrimidine nucleotide biosynthesis pathway. This is Aspartate carbamoyltransferase catalytic subunit from Haloarcula marismortui (strain ATCC 43049 / DSM 3752 / JCM 8966 / VKM B-1809) (Halobacterium marismortui).